The sequence spans 201 residues: Holliday junction branch migration complex subunit RuvA (201 aa).

Positions 1–63 (MYDYIKGTVT…EDNISLFGFQ (63 aa)) are domain I. Residues 64–142 (TTEERYLFKK…DVVASEIVYV (79 aa)) are domain II. The interval 143–153 (APENDMVAGLS) is flexible linker. Residues 153-201 (SPQLEEAVLALEALGYSTRELKKVIPKLSKEEDLTSDAYIKLALQLMTK) are domain III.

This sequence belongs to the RuvA family. As to quaternary structure, homotetramer. Forms an RuvA(8)-RuvB(12)-Holliday junction (HJ) complex. HJ DNA is sandwiched between 2 RuvA tetramers; dsDNA enters through RuvA and exits via RuvB. An RuvB hexamer assembles on each DNA strand where it exits the tetramer. Each RuvB hexamer is contacted by two RuvA subunits (via domain III) on 2 adjacent RuvB subunits; this complex drives branch migration. In the full resolvosome a probable DNA-RuvA(4)-RuvB(12)-RuvC(2) complex forms which resolves the HJ.

Its subcellular location is the cytoplasm. The RuvA-RuvB-RuvC complex processes Holliday junction (HJ) DNA during genetic recombination and DNA repair, while the RuvA-RuvB complex plays an important role in the rescue of blocked DNA replication forks via replication fork reversal (RFR). RuvA specifically binds to HJ cruciform DNA, conferring on it an open structure. The RuvB hexamer acts as an ATP-dependent pump, pulling dsDNA into and through the RuvAB complex. HJ branch migration allows RuvC to scan DNA until it finds its consensus sequence, where it cleaves and resolves the cruciform DNA. This Listeria monocytogenes serotype 4b (strain CLIP80459) protein is Holliday junction branch migration complex subunit RuvA.